Reading from the N-terminus, the 599-residue chain is Leishmanolysin (599 aa).

The first 39 residues, 1 to 39, serve as a signal peptide directing secretion; it reads MSVDSSSTHRHRSVAARLVRLAAAGAAVIAAVGTAAAWA. Positions 40–97 are cleaved as a propeptide — activation peptide; sequence HAGAVQHRCIHDAMQARVRQSVARHHTAPGAVSAVGLPYVTLDTAAAADRRPGSAPTV. 2 disulfide bridges follow: Cys122-Cys139 and Cys188-Cys227. His261 serves as a coordination point for Zn(2+). The active site involves Glu262. His265 serves as a coordination point for Zn(2+). Residue Asn297 is glycosylated (N-linked (GlcNAc...) asparagine). 7 cysteine pairs are disulfide-bonded: Cys311–Cys383, Cys390–Cys452, Cys403–Cys422, Cys412–Cys486, Cys463–Cys507, Cys512–Cys562, and Cys532–Cys555. His331 contributes to the Zn(2+) binding site. An N-linked (GlcNAc...) asparagine glycan is attached at Asn394. A lipid anchor (GPI-anchor amidated asparagine) is attached at Asn574. A propeptide spans 575–599 (removed in mature form); sequence AAAGRRGPRAAATALLVAALLAVAL.

The protein belongs to the peptidase M8 family. Requires Zn(2+) as cofactor.

It is found in the cell membrane. The enzyme catalyses Preference for hydrophobic residues at P1 and P1' and basic residues at P2' and P3'. A model nonapeptide is cleaved at -Ala-Tyr-|-Leu-Lys-Lys-.. In terms of biological role, has an integral role during the infection of macrophages in the mammalian host. In Leishmania chagasi, this protein is Leishmanolysin (gp63).